Here is a 418-residue protein sequence, read N- to C-terminus: NADH-quinone oxidoreductase subunit H (418 aa).

Transmembrane regions (helical) follow at residues 15 to 35 (LVLG…LVAI), 83 to 103 (FVYF…FAFI), 123 to 143 (LPVA…GIVL), 164 to 184 (VISY…YAGS), 197 to 217 (VWFV…MVGE), 262 to 282 (LATA…MWAG), 287 to 307 (WWPV…YFWL), 321 to 341 (GLGW…AAVI), and 349 to 369 (YAHW…ALVL). Residues 394-418 (AAHRAGFHPGIPDTAAAGESAGGRE) form a disordered region.

It belongs to the complex I subunit 1 family. In terms of assembly, NDH-1 is composed of 14 different subunits. Subunits NuoA, H, J, K, L, M, N constitute the membrane sector of the complex.

The protein localises to the cell membrane. It carries out the reaction a quinone + NADH + 5 H(+)(in) = a quinol + NAD(+) + 4 H(+)(out). Its function is as follows. NDH-1 shuttles electrons from NADH, via FMN and iron-sulfur (Fe-S) centers, to quinones in the respiratory chain. The immediate electron acceptor for the enzyme in this species is believed to be menaquinone. Couples the redox reaction to proton translocation (for every two electrons transferred, four hydrogen ions are translocated across the cytoplasmic membrane), and thus conserves the redox energy in a proton gradient. This subunit may bind ubiquinone. The sequence is that of NADH-quinone oxidoreductase subunit H from Mycobacterium avium (strain 104).